A 591-amino-acid chain; its full sequence is Aspartate--tRNA ligase (591 aa).

Residue Glu-176 coordinates L-aspartate. An aspartate region spans residues 200-203; it reads QILK. Residue Arg-222 participates in L-aspartate binding. ATP is bound by residues 222–224 and Gln-231; that span reads RDE. His-450 serves as a coordination point for L-aspartate. An ATP-binding site is contributed by Glu-484. Arg-491 is a binding site for L-aspartate. 536–539 contributes to the ATP binding site; that stretch reads GLDR.

Belongs to the class-II aminoacyl-tRNA synthetase family. Type 1 subfamily. As to quaternary structure, homodimer.

The protein localises to the cytoplasm. The enzyme catalyses tRNA(Asp) + L-aspartate + ATP = L-aspartyl-tRNA(Asp) + AMP + diphosphate. Its function is as follows. Catalyzes the attachment of L-aspartate to tRNA(Asp) in a two-step reaction: L-aspartate is first activated by ATP to form Asp-AMP and then transferred to the acceptor end of tRNA(Asp). This is Aspartate--tRNA ligase from Listeria monocytogenes serotype 4b (strain F2365).